Consider the following 843-residue polypeptide: Leucine--tRNA ligase (843 aa).

The short motif at proline 61–histidine 71 is the 'HIGH' region element. A 'KMSKS' region motif is present at residues alanine 606–serine 610. Lysine 609 contributes to the ATP binding site.

It belongs to the class-I aminoacyl-tRNA synthetase family.

Its subcellular location is the cytoplasm. It catalyses the reaction tRNA(Leu) + L-leucine + ATP = L-leucyl-tRNA(Leu) + AMP + diphosphate. The protein is Leucine--tRNA ligase of Arthrobacter sp. (strain FB24).